A 549-amino-acid chain; its full sequence is Cytoplasmic trehalase (549 aa).

Substrate-binding positions include Arg168, 175–176 (WD), Asn212, 221–223 (RSQ), 292–294 (RDE), and Gly324. Catalysis depends on proton donor/acceptor residues Asp326 and Glu509. A substrate-binding site is contributed by Glu525.

This sequence belongs to the glycosyl hydrolase 37 family. As to quaternary structure, monomer.

It localises to the cytoplasm. It carries out the reaction alpha,alpha-trehalose + H2O = alpha-D-glucose + beta-D-glucose. It functions in the pathway glycan degradation; trehalose degradation; D-glucose from alpha,alpha-trehalose: step 1/1. Hydrolyzes trehalose to glucose. Could be involved, in cells returning to low osmolarity conditions, in the utilization of the accumulated cytoplasmic trehalose, which was synthesized in response to high osmolarity. The sequence is that of Cytoplasmic trehalase from Escherichia coli (strain 55989 / EAEC).